We begin with the raw amino-acid sequence, 150 residues long: Leukotriene C4 synthase (150 aa).

The Cytoplasmic portion of the chain corresponds to 1-6 (MKEETA). A helical membrane pass occupies residues 7 to 27 (LLATVTLLGVLLQAYFSLQVI). The Lumenal portion of the chain corresponds to 28 to 48 (SARRTFHVSPPLTSGPPEFER). Position 30 (R30) interacts with glutathione. R31 (proton donor) is an active-site residue. S36 carries the post-translational modification Phosphoserine. The helical transmembrane segment at 49–69 (VFRAQVNCSEYFPLFLATLWV) threads the bilayer. Glutathione is bound by residues 51 to 55 (RAQVN) and 58 to 59 (EY). Topologically, residues 70 to 73 (AGIF) are cytoplasmic. A helical transmembrane segment spans residues 74–94 (FHEGAAALCGLFYLFARLRYF). 93–97 (YFQGY) contributes to the glutathione binding site. The Lumenal segment spans residues 95 to 104 (QGYARSAQHR). R104 functions as the Proton acceptor in the catalytic mechanism. A helical membrane pass occupies residues 105–124 (LDPLYASARALWLLVAMAAL). Residues 125–150 (GLLVHFLPGTLRAALFRWLQVLLPMA) lie on the Cytoplasmic side of the membrane.

The protein belongs to the MAPEG family. In terms of assembly, homotrimer. Interacts with ALOX5AP and ALOX5. Phosphorylation at Ser-36 by RPS6KB1 inhibits the leukotriene-C4 synthase activity.

It localises to the nucleus outer membrane. The protein resides in the endoplasmic reticulum membrane. Its subcellular location is the nucleus membrane. The enzyme catalyses leukotriene C4 = leukotriene A4 + glutathione. The catalysed reaction is (13S,14S)-epoxy-(4Z,7Z,9E,11E,16Z,19Z)-docosahexaenoate + glutathione = (13R)-S-glutathionyl-(14S)-hydroxy-(4Z,7Z,9E,11E,16Z,19Z)-docosahexaenoate. It functions in the pathway lipid metabolism; leukotriene C4 biosynthesis. Its activity is regulated as follows. Inhibited by MK886. Its function is as follows. Catalyzes the conjugation of leukotriene A4 with reduced glutathione (GSH) to form leukotriene C4 with high specificity. Can also catalyze the transfer of a glutathionyl group from glutathione (GSH) to 13(S),14(S)-epoxy-docosahexaenoic acid to form maresin conjugate in tissue regeneration 1 (MCTR1), a bioactive lipid mediator that possess potent anti-inflammatory and proresolving actions. This chain is Leukotriene C4 synthase (Ltc4s), found in Rattus norvegicus (Rat).